Here is a 434-residue protein sequence, read N- to C-terminus: Glutamyl-tRNA reductase (434 aa).

Substrate is bound by residues 49-52 (TCNR), serine 109, 114-116 (EPQ), and glutamine 120. The active-site Nucleophile is the cysteine 50. NADP(+) is bound at residue 189–194 (GAGEMC).

This sequence belongs to the glutamyl-tRNA reductase family. In terms of assembly, homodimer.

It catalyses the reaction (S)-4-amino-5-oxopentanoate + tRNA(Glu) + NADP(+) = L-glutamyl-tRNA(Glu) + NADPH + H(+). The protein operates within porphyrin-containing compound metabolism; protoporphyrin-IX biosynthesis; 5-aminolevulinate from L-glutamyl-tRNA(Glu): step 1/2. Functionally, catalyzes the NADPH-dependent reduction of glutamyl-tRNA(Glu) to glutamate 1-semialdehyde (GSA). The chain is Glutamyl-tRNA reductase from Citrifermentans bemidjiense (strain ATCC BAA-1014 / DSM 16622 / JCM 12645 / Bem) (Geobacter bemidjiensis).